Here is a 509-residue protein sequence, read N- to C-terminus: MDEYEAQLVAVEQALENTTDEQQREELSTLRTNLQELLALTRETEADQTAEQGDILDDELLRLKSELNELEEAAANVGATKNKDEEQQLKDLRAKYNALVGEKCSAPHEHSWGALSYHNALICGVDDEVIINRNSELDVRLRVLYINPTHCEMLPCNYYLEGECRFDEIRCRYSHGALVPGASIKSYIPPDFPRLARNCPVLAKMPDRLWHRGRVLCANFVEQTCRVRLDGQDHKERERDFQFEELFPLITEEEDGLTSEDSSSSPHDESSDEIDSDMDDLEAAHRSRMVELSLFTFKPTEKLGAWEQYTRGIGSKLMEKMGYIHGTGLGSEGRGIVTPVSAQILPQGRSLDACMELREAANGDQDYFSVERKLKRAQRRQNKANEKAYARETQRTDVFSFLNGSVLGGGESRHQGDQAAKKAKTNDLQQHSTKTLNVETVRVADDIRRKQRDIAKVKQSLDRNATDIQLQKRLHMQLQSQKQELATLQAHEHRLSKEQHTRKNKMFEF.

The C3H1-type zinc finger occupies 155–178; it reads PCNYYLEGECRFDEIRCRYSHGAL. The segment at 253–277 is disordered; the sequence is EEDGLTSEDSSSSPHDESSDEIDSD. The G-patch domain occupies 310 to 356; it reads TRGIGSKLMEKMGYIHGTGLGSEGRGIVTPVSAQILPQGRSLDACME. The segment at 409 to 430 is disordered; that stretch reads GGESRHQGDQAAKKAKTNDLQQ. The segment covering 411–420 has biased composition (basic and acidic residues); the sequence is ESRHQGDQAA.

The protein localises to the nucleus. Its function is as follows. Transcription repressor. This chain is Zinc finger CCCH-type with G patch domain-containing protein, found in Drosophila persimilis (Fruit fly).